A 229-amino-acid chain; its full sequence is ATP synthase subunit a (229 aa).

A run of 6 helical transmembrane segments spans residues 14–34, 68–88, 98–118, 124–144, 157–179, and 189–209; these read LIAI…ALIL, YFPF…LGLF, IVVT…GGLW, FLSI…LVLI, GVRL…GFGF, and NIFP…VAVI.

It belongs to the ATPase A chain family. F-type ATPases have 2 components, CF(1) - the catalytic core - and CF(0) - the membrane proton channel. CF(1) has five subunits: alpha(3), beta(3), gamma(1), delta(1), epsilon(1). CF(0) has three main subunits: a, b and c.

It localises to the mitochondrion inner membrane. Functionally, mitochondrial membrane ATP synthase (F(1)F(0) ATP synthase or Complex V) produces ATP from ADP in the presence of a proton gradient across the membrane which is generated by electron transport complexes of the respiratory chain. F-type ATPases consist of two structural domains, F(1) - containing the extramembraneous catalytic core and F(0) - containing the membrane proton channel, linked together by a central stalk and a peripheral stalk. During catalysis, ATP synthesis in the catalytic domain of F(1) is coupled via a rotary mechanism of the central stalk subunits to proton translocation. Key component of the proton channel; it may play a direct role in the translocation of protons across the membrane. This Metridium senile (Brown sea anemone) protein is ATP synthase subunit a (ATPASE6).